The primary structure comprises 257 residues: Hydroxyacylglutathione hydrolase (257 aa).

Residues His54, His56, Asp58, His59, His113, Asp137, and His175 each contribute to the Zn(2+) site.

The protein belongs to the metallo-beta-lactamase superfamily. Glyoxalase II family. As to quaternary structure, monomer. Requires Zn(2+) as cofactor.

The catalysed reaction is an S-(2-hydroxyacyl)glutathione + H2O = a 2-hydroxy carboxylate + glutathione + H(+). It functions in the pathway secondary metabolite metabolism; methylglyoxal degradation; (R)-lactate from methylglyoxal: step 2/2. In terms of biological role, thiolesterase that catalyzes the hydrolysis of S-D-lactoyl-glutathione to form glutathione and D-lactic acid. The sequence is that of Hydroxyacylglutathione hydrolase from Nostoc punctiforme (strain ATCC 29133 / PCC 73102).